The chain runs to 200 residues: Molybdenum cofactor guanylyltransferase (200 aa).

GTP contacts are provided by residues 10 to 12, lysine 23, asparagine 51, aspartate 69, and aspartate 99; that span reads LAG. Position 99 (aspartate 99) interacts with Mg(2+).

This sequence belongs to the MobA family. In terms of assembly, monomer. Requires Mg(2+) as cofactor.

The protein resides in the cytoplasm. It carries out the reaction Mo-molybdopterin + GTP + H(+) = Mo-molybdopterin guanine dinucleotide + diphosphate. Transfers a GMP moiety from GTP to Mo-molybdopterin (Mo-MPT) cofactor (Moco or molybdenum cofactor) to form Mo-molybdopterin guanine dinucleotide (Mo-MGD) cofactor. This chain is Molybdenum cofactor guanylyltransferase, found in Shewanella pealeana (strain ATCC 700345 / ANG-SQ1).